Consider the following 150-residue polypeptide: Snake venom vascular endothelial growth factor toxin barietin (150 aa).

Residues 1-24 form the signal peptide; the sequence is MAAYLLAVAILFCIQGWPSGTVQG. Residue Glu25 is modified to Pyrrolidone carboxylic acid (Glu). Disulfide bonds link Cys38-Cys80, Cys69-Cys115, and Cys73-Cys117. The interval 119-150 is disordered; the sequence is PRSGSRVNIGKHKRSPEEGEREPSSPLTPGSL. Positions 122 to 150 are excised as a propeptide; sequence GSRVNIGKHKRSPEEGEREPSSPLTPGSL.

It belongs to the PDGF/VEGF growth factor family. Snake venom VEGF subfamily. In terms of assembly, homodimer; disulfide-linked. Interacts with high affinity with VEGF receptor-2 (KDR), and with a lower affinity with VEGF receptor-1 (FLT1). Does not bind VEGF receptor-3 (FLT4) and neuropilin-1 (NRP1). As to expression, expressed by the venom gland.

Its subcellular location is the secreted. Its function is as follows. Snake venom VEGFs that may contribute to venom dispersion and prey subjugation by inducing vascular permeability and hypotension. This protein induces an increase in capillary permeability after intradermal injection, as well as a drastic hypotensive effect after intravenous injection. The hypotension is mediated by nitric oxide (NO), which is produced by VEGF-activated endothelium NO synthase. Also induces angiogenesis in vitro, probably through VEGF receptor (KDR/VEGFR-2) signaling. In Bitis arietans (African puff adder), this protein is Snake venom vascular endothelial growth factor toxin barietin.